A 101-amino-acid polypeptide reads, in one-letter code: Large ribosomal subunit protein uL23 (101 aa).

It belongs to the universal ribosomal protein uL23 family. Part of the 50S ribosomal subunit. Contacts protein L29, and trigger factor when it is bound to the ribosome.

Its function is as follows. One of the early assembly proteins it binds 23S rRNA. One of the proteins that surrounds the polypeptide exit tunnel on the outside of the ribosome. Forms the main docking site for trigger factor binding to the ribosome. This Histophilus somni (strain 129Pt) (Haemophilus somnus) protein is Large ribosomal subunit protein uL23.